A 215-amino-acid polypeptide reads, in one-letter code: MIFDPKMLQVYLVGGTQDVHNDVVKFLEKVELAMKSGITAFQYREKGNSKLRPNERVDLGLELRTLCTHYGIPLIVDDDYELAQQINADGVHVGQNDTKIEQVSVAVGHQMFIGYSCNTPEQVERANTMDFIDYIGCGPVFPTKSKSDADTAIGINRLERLNMISERPVVAIGGIDEENMKVVHDTGVAGLAVISLVFDSKDLVATVKKMKNLYK.

4-amino-2-methyl-5-(diphosphooxymethyl)pyrimidine is bound by residues 42–46 (QYREK) and aspartate 77. Residues aspartate 78 and aspartate 97 each coordinate Mg(2+). A 4-amino-2-methyl-5-(diphosphooxymethyl)pyrimidine-binding site is contributed by serine 116. 143 to 145 (TKS) contacts 2-[(2R,5Z)-2-carboxy-4-methylthiazol-5(2H)-ylidene]ethyl phosphate. Lysine 146 serves as a coordination point for 4-amino-2-methyl-5-(diphosphooxymethyl)pyrimidine. Residues glycine 174 and 194–195 (IS) each bind 2-[(2R,5Z)-2-carboxy-4-methylthiazol-5(2H)-ylidene]ethyl phosphate.

The protein belongs to the thiamine-phosphate synthase family. Requires Mg(2+) as cofactor.

The enzyme catalyses 2-[(2R,5Z)-2-carboxy-4-methylthiazol-5(2H)-ylidene]ethyl phosphate + 4-amino-2-methyl-5-(diphosphooxymethyl)pyrimidine + 2 H(+) = thiamine phosphate + CO2 + diphosphate. It catalyses the reaction 2-(2-carboxy-4-methylthiazol-5-yl)ethyl phosphate + 4-amino-2-methyl-5-(diphosphooxymethyl)pyrimidine + 2 H(+) = thiamine phosphate + CO2 + diphosphate. It carries out the reaction 4-methyl-5-(2-phosphooxyethyl)-thiazole + 4-amino-2-methyl-5-(diphosphooxymethyl)pyrimidine + H(+) = thiamine phosphate + diphosphate. It participates in cofactor biosynthesis; thiamine diphosphate biosynthesis; thiamine phosphate from 4-amino-2-methyl-5-diphosphomethylpyrimidine and 4-methyl-5-(2-phosphoethyl)-thiazole: step 1/1. In terms of biological role, condenses 4-methyl-5-(beta-hydroxyethyl)thiazole monophosphate (THZ-P) and 2-methyl-4-amino-5-hydroxymethyl pyrimidine pyrophosphate (HMP-PP) to form thiamine monophosphate (TMP). This chain is Thiamine-phosphate synthase, found in Limosilactobacillus reuteri (strain DSM 20016) (Lactobacillus reuteri).